The sequence spans 109 residues: Putative double-stranded DNA mimic protein CKO_01325 (109 aa).

Belongs to the putative dsDNA mimic protein family.

Functionally, may act as a double-stranded DNA (dsDNA) mimic. Probably regulates the activity of a dsDNA-binding protein. The protein is Putative double-stranded DNA mimic protein CKO_01325 of Citrobacter koseri (strain ATCC BAA-895 / CDC 4225-83 / SGSC4696).